The primary structure comprises 534 residues: Membrane protein insertase YidC (534 aa).

5 consecutive transmembrane segments (helical) span residues 7–27 (IIAVVLSFIVLVGWGYLSEYM), 319–339 (AIDLGWFGFIARPLVTLLDFF), 342–362 (YVGNYGTAIILLTILIKLVFW), 413–433 (GGCLPMLVQIPVFFGLYQALL), and 493–513 (VMMFMPVVFTFLFLNFPSGLV).

Belongs to the OXA1/ALB3/YidC family. Type 1 subfamily. As to quaternary structure, interacts with the Sec translocase complex via SecD. Specifically interacts with transmembrane segments of nascent integral membrane proteins during membrane integration.

Its subcellular location is the cell inner membrane. Required for the insertion and/or proper folding and/or complex formation of integral membrane proteins into the membrane. Involved in integration of membrane proteins that insert both dependently and independently of the Sec translocase complex, as well as at least some lipoproteins. Aids folding of multispanning membrane proteins. The sequence is that of Membrane protein insertase YidC from Nitratidesulfovibrio vulgaris (strain ATCC 29579 / DSM 644 / CCUG 34227 / NCIMB 8303 / VKM B-1760 / Hildenborough) (Desulfovibrio vulgaris).